The sequence spans 492 residues: N-succinylglutamate 5-semialdehyde dehydrogenase (492 aa).

220-225 is an NAD(+) binding site; sequence GSANTG. Residues Glu243 and Cys277 contribute to the active site.

It belongs to the aldehyde dehydrogenase family. AstD subfamily.

It catalyses the reaction N-succinyl-L-glutamate 5-semialdehyde + NAD(+) + H2O = N-succinyl-L-glutamate + NADH + 2 H(+). Its pathway is amino-acid degradation; L-arginine degradation via AST pathway; L-glutamate and succinate from L-arginine: step 4/5. Catalyzes the NAD-dependent reduction of succinylglutamate semialdehyde into succinylglutamate. In Escherichia coli O139:H28 (strain E24377A / ETEC), this protein is N-succinylglutamate 5-semialdehyde dehydrogenase.